Here is a 129-residue protein sequence, read N- to C-terminus: Follitropin subunit beta (129 aa).

A signal peptide spans 1 to 20; it reads MKTVQFCFLFCCWKAICCNS. 6 disulfide bridges follow: cysteine 21-cysteine 69, cysteine 35-cysteine 84, cysteine 38-cysteine 122, cysteine 46-cysteine 100, cysteine 50-cysteine 102, and cysteine 105-cysteine 112. Residues asparagine 25 and asparagine 42 are each glycosylated (N-linked (GlcNAc...) asparagine).

This sequence belongs to the glycoprotein hormones subunit beta family. Heterodimer. The active follitropin is a heterodimer composed of an alpha chain/CGA shared with other hormones and a unique beta chain/FSHB shown here.

It is found in the secreted. Functionally, together with the alpha chain CGA constitutes follitropin, the follicle-stimulating hormone, and provides its biological specificity to the hormone heterodimer. Binds FSHR, a G protein-coupled receptor, on target cells to activate downstream signaling pathways. Follitropin is involved in follicle development and spermatogenesis in reproductive organs. In Saimiri boliviensis boliviensis (Bolivian squirrel monkey), this protein is Follitropin subunit beta (FSHB).